We begin with the raw amino-acid sequence, 260 residues long: MTSLKLLKEKAPLVICITNDVVKNFTANGLVALGASPAMSEFPADLEDLLKYAGGLLINIGTLTDENWKLYQAALKIAEKYNVPAVLDPVACGAGEYRKKVADDLINNYKLAAIRGNAGEIASLVGIDVASKGVDSAGVDNIDEIALAANEKFNIPIVVTGEVDAIAVNGEVVTIHNGSAMMPKVIGTGCLLGAVVASFIGLEKGQELKSLETAMLVYNIAGEIAEKRPNGHLPGTFKAEFINALYEITDEDVKEFKRVK.

M39 is a binding site for substrate. ATP-binding residues include R115 and T160. G187 is a substrate binding site.

The protein belongs to the Thz kinase family. Requires Mg(2+) as cofactor.

The catalysed reaction is 5-(2-hydroxyethyl)-4-methylthiazole + ATP = 4-methyl-5-(2-phosphooxyethyl)-thiazole + ADP + H(+). It functions in the pathway cofactor biosynthesis; thiamine diphosphate biosynthesis; 4-methyl-5-(2-phosphoethyl)-thiazole from 5-(2-hydroxyethyl)-4-methylthiazole: step 1/1. Catalyzes the phosphorylation of the hydroxyl group of 4-methyl-5-beta-hydroxyethylthiazole (THZ). In Streptococcus pneumoniae (strain Taiwan19F-14), this protein is Hydroxyethylthiazole kinase 1.